Here is a 153-residue protein sequence, read N- to C-terminus: Putative tRNA (cytidine(34)-2'-O)-methyltransferase (153 aa).

S-adenosyl-L-methionine-binding residues include glycine 102, isoleucine 122, and serine 131.

Belongs to the class IV-like SAM-binding methyltransferase superfamily. RNA methyltransferase TrmH family. TrmL subfamily.

The protein resides in the cytoplasm. The catalysed reaction is cytidine(34) in tRNA + S-adenosyl-L-methionine = 2'-O-methylcytidine(34) in tRNA + S-adenosyl-L-homocysteine + H(+). It catalyses the reaction 5-carboxymethylaminomethyluridine(34) in tRNA(Leu) + S-adenosyl-L-methionine = 5-carboxymethylaminomethyl-2'-O-methyluridine(34) in tRNA(Leu) + S-adenosyl-L-homocysteine + H(+). Functionally, could methylate the ribose at the nucleotide 34 wobble position in tRNA. The polypeptide is Putative tRNA (cytidine(34)-2'-O)-methyltransferase (Synechocystis sp. (strain ATCC 27184 / PCC 6803 / Kazusa)).